The following is a 947-amino-acid chain: DEAD-box ATP-dependent RNA helicase 45 (947 aa).

Residues 1–14 (MEEEEVVVVVDEEE) are compositionally biased toward acidic residues. 2 disordered regions span residues 1–132 (MEEE…EDEI) and 159–221 (SMPA…EEFM). 2 stretches are compositionally biased toward basic and acidic residues: residues 15–31 (SERR…KRLD) and 42–61 (KEWQ…REQE). A compositionally biased stretch (low complexity) spans 62 to 82 (AAAGAGTPAAAAGADGDSNAG). Acidic residues-rich tracts occupy residues 88 to 108 (DGEE…EDDG) and 196 to 219 (DDSD…DDEE). A Q motif motif is present at residues 285-313 (KTWVQSGLTSKLLDTIKKLGFEKPMPIQA). Positions 316 to 494 (LPIIMSGRDC…RKVLTKPVEI (179 aa)) constitute a Helicase ATP-binding domain. 329–336 (AKTGSGKT) lines the ATP pocket. The DEAD box motif lies at 442–445 (DEAD). Residues 479–647 (QVEILARKVL…AVPQDLKGLA (169 aa)) enclose the Helicase C-terminal domain. The interval 658–710 (TEQAHGTGYGGSGFKFNEEEDEARRSAKKAQAREYGYEEDKSDSDSDEEGGVR) is disordered. Residues 697 to 706 (DKSDSDSDEE) are compositionally biased toward acidic residues. A coiled-coil region spans residues 854–879 (TELSVKKAKSELKRVLEDCANHALNL).

This sequence belongs to the DEAD box helicase family. DDX46/PRP5 subfamily.

The catalysed reaction is ATP + H2O = ADP + phosphate + H(+). The chain is DEAD-box ATP-dependent RNA helicase 45 from Oryza sativa subsp. japonica (Rice).